We begin with the raw amino-acid sequence, 529 residues long: Probable alpha-galactosidase A (529 aa).

Positions 1–19 (MKALFAAITMAHALLQTQA) are cleaved as a signal peptide. A disulfide bond links C42 and C74. 4 N-linked (GlcNAc...) asparagine glycosylation sites follow: N45, N83, N89, and N119. C122 and C152 are joined by a disulfide. The active-site Nucleophile is the D150. N-linked (GlcNAc...) asparagine glycosylation occurs at N199. D208 serves as the catalytic Proton donor. N351 carries an N-linked (GlcNAc...) asparagine glycan. Residues 408–528 (RVDAVSTGIV…GLPSGVRVSG (121 aa)) form the Ricin B-type lectin domain. 2 cysteine pairs are disulfide-bonded: C425–C438 and C462–C475.

Belongs to the glycosyl hydrolase 27 family.

The protein resides in the secreted. It catalyses the reaction Hydrolysis of terminal, non-reducing alpha-D-galactose residues in alpha-D-galactosides, including galactose oligosaccharides, galactomannans and galactolipids.. Hydrolyzes a variety of simple alpha-D-galactoside as well as more complex molecules such as oligosaccharides and polysaccharides. This Aspergillus terreus (strain NIH 2624 / FGSC A1156) protein is Probable alpha-galactosidase A (aglA).